The following is a 126-amino-acid chain: Large-conductance mechanosensitive channel (126 aa).

3 consecutive transmembrane segments (helical) span residues 14-34 (VIDL…VTSL), 40-60 (MPLL…FTFV), and 67-87 (GLFI…FLFI).

It belongs to the MscL family. Homopentamer.

Its subcellular location is the cell membrane. Functionally, channel that opens in response to stretch forces in the membrane lipid bilayer. May participate in the regulation of osmotic pressure changes within the cell. The polypeptide is Large-conductance mechanosensitive channel (Bacillus licheniformis (strain ATCC 14580 / DSM 13 / JCM 2505 / CCUG 7422 / NBRC 12200 / NCIMB 9375 / NCTC 10341 / NRRL NRS-1264 / Gibson 46)).